The sequence spans 935 residues: Myocardin (935 aa).

Positions 12-27 (IRRKFRSVLQLRLQQR) match the MEF2C-binding motif. RPEL repeat units follow at residues 18-43 (SVLQLRLQQRRTQEQLANQGLIPPLK), 62-87 (DSLRRKGRNRSDRASLVTMHILQAST), and 106-131 (DDLNEKIALRPGPLELVEKNILPMDS). Residues 37–73 (GLIPPLKGPTEFHDPRKQLDSAKTEDSLRRKGRNRSD) are disordered. Residues 46–73 (TEFHDPRKQLDSAKTEDSLRRKGRNRSD) show a composition bias toward basic and acidic residues. Positions 153 to 201 (FEDDSSRDGLSPDQARSEDPQGSTGSTPDIKSTEAPLDTIQDLTPGSES) are HDAC5-binding. The interval 155–283 (DDSSRDGLSP…SPPPMDSAYA (129 aa)) is disordered. 2 stretches are compositionally biased toward polar residues: residues 172-182 (PQGSTGSTPDI) and 206-216 (AASQPGNQSDP). Positions 244–261 (NRHKKPKDPKPKVKKLKY) are enriched in basic residues. Residues 287 to 322 (QQQQLFLQLQILSQQQQQQQQQQQQQQQQQQQQQRF) adopt a coiled-coil conformation. The interval 337 to 378 (EQMARNPNPSSTPLSNTPLSPVKNSISGQTGVSSLKPGPLPP) is disordered. Residues 342-357 (NPNPSSTPLSNTPLSP) show a composition bias toward low complexity. The span at 358–369 (VKNSISGQTGVS) shows a compositional bias: polar residues. Residues 380 to 414 (LDDLKVSELRQQLRIRGLPVSGTKTALVDRLRPFQ) enclose the SAP domain. A phosphoserine; by GSK3-beta mark is found at Ser-454, Ser-458, Ser-462, and Ser-466. Positions 498 to 518 (ESLLSSLNGGSGPSEPDGLDS) are disordered. Residues 519-563 (EKDKMLVEKQKVINQLTWKLRQEQRQVEELRMQLQKQKSSCSDQK) are a coiled coil. Residues 579-605 (SCPFAPQQASGKGQGHSSDSPPPACET) form a disordered region. Over residues 585-597 (QQASGKGQGHSSD) the composition is skewed to polar residues. Phosphoserine; by GSK3-beta is present on residues Ser-624, Ser-628, Ser-632, and Ser-636. The interval 654–731 (NNHYFLASSS…DAVKQQMTRS (78 aa)) is disordered. The segment covering 660–691 (ASSSGAQRENHGVSSPSSSQGCAQMTGLQSSD) has biased composition (polar residues). The span at 695–709 (PTFSIPSPTFSKSSS) shows a compositional bias: low complexity. The segment at 714 to 935 (ITQPPSYEDA…SPMDLHLQQW (222 aa)) is required for interaction with and ubiquitination by STUB1. Ser-812, Ser-859, and Ser-866 each carry phosphoserine; by MAPK1 and MAPK3. Thr-893 carries the post-translational modification Phosphothreonine; by MAPK1 and MAPK3.

Homodimer. Interacts with MLLT7/FOXO4. Interacts with SRF, its association does not depend on specific DNA sequences for ternary complex formation. Interacts (via C-terminal) with EP300 (via CREB-binding domain). Interacts with HDAC4 and HDAC5. Interacts with MEF2C. Interacts (via C-terminus) with STUB1/CHIP. Interacts with PURB. In terms of processing, ubiquitinated; by STUB1/CHIP at the C-terminus, leading to its degradation by the proteasome. Phosphorylation by GSK3B is required for STUB1/CHIP-mediated ubiquitination. Phosphorylation negatively regulates transcriptional activity. Phosphorylated; by GSK3B. In terms of tissue distribution, expressed in smooth muscle cell-containing tissues. Expressed in the heart. Expressed in the aorta and bladder. Weakly expression in the lung, testis and kidney. Weakly expressed in the stomach. Weakly expressed in the intestine and colon. Expressed in the heart. As to expression, predominantly expressed in cardiac muscle. In terms of tissue distribution, predominantly expressed in smooth muscle cell-rich tissues.

Its subcellular location is the nucleus speckle. Its function is as follows. Smooth muscle cells (SM) and cardiac muscle cells-specific transcriptional factor which uses the canonical single or multiple CArG boxes DNA sequence. Acts as a cofactor of serum response factor (SRF) with the potential to modulate SRF-target genes. Plays a crucial role in cardiogenesis, urinary bladder development, and differentiation of the smooth muscle cell lineage (myogenesis). Positively regulates the transcription of genes involved in vascular smooth muscle contraction. In terms of biological role, positively regulates the activation of smooth muscle cell gene promoter regions. Functionally, positively regulates the activation of smooth muscle cell gene promoter regions. Activation of the MYH6 promoter is enhanced in the presence of MEF2C. In Mus musculus (Mouse), this protein is Myocardin (Myocd).